A 556-amino-acid polypeptide reads, in one-letter code: Formate--tetrahydrofolate ligase (556 aa).

ATP is bound at residue 65–72 (TPAGEGKT).

The protein belongs to the formate--tetrahydrofolate ligase family.

It catalyses the reaction (6S)-5,6,7,8-tetrahydrofolate + formate + ATP = (6R)-10-formyltetrahydrofolate + ADP + phosphate. The protein operates within one-carbon metabolism; tetrahydrofolate interconversion. This chain is Formate--tetrahydrofolate ligase, found in Agathobacter rectalis (strain ATCC 33656 / DSM 3377 / JCM 17463 / KCTC 5835 / VPI 0990) (Eubacterium rectale).